The chain runs to 316 residues: Rhomboid-related protein 4 (316 aa).

Residues 1-21 (MQRRTRGIDTGLLLLLSQVFH) lie on the Cytoplasmic side of the membrane. A helical membrane pass occupies residues 22–42 (IGINNIPPVTLATLAVNVWFF). The Extracellular segment spans residues 43-103 (LNPWKPLYHS…KLEKRLGSRW (61 aa)). A helical transmembrane segment spans residues 104–124 (FAYIIATFSLLTGVVYLLLQF). Topologically, residues 125-137 (ASAELMNQPDFKR) are cytoplasmic. A helical membrane pass occupies residues 138–154 (NCAVGFSGVLFALKVLS). Catalysis depends on Ser-144, which acts as the Nucleophile. At 155 to 182 (NHYCPGGFVNILGFPVPNRFACWAELAA) the chain is on the extracellular side. The helical transmembrane segment at 183–203 (IHFCTPGTSFAGHLAGILVGL) threads the bilayer. The active site involves His-195. At 204-316 (MYTQGPLKKI…RQRLHRFDGQ (113 aa)) the chain is on the cytoplasmic side. The tract at residues 269–284 (SEEEQLERALRASIWD) is ubiquitin-binding domain (UBD). The interval 301–316 (PEEEMRRQRLHRFDGQ) is VCP/p97-interacting motif (VIM).

Belongs to the peptidase S54 family. In terms of assembly, interacts with BIK and STEAP3. Interacts (via C-terminal domain) with VCP. Interacts with ubiquitin and ubiquitinated proteins. In terms of tissue distribution, expressed in intestine, lung, brain, kidney, epididymis and testis.

It is found in the endoplasmic reticulum membrane. Its subcellular location is the mitochondrion membrane. The catalysed reaction is Cleaves type-1 transmembrane domains using a catalytic dyad composed of serine and histidine that are contributed by different transmembrane domains.. With respect to regulation, inhibited by aprotinin. Intramembrane-cleaving serine protease that cleaves single transmembrane or multi-pass membrane proteins in the hydrophobic plane of the membrane, luminal loops and juxtamembrane regions. Involved in regulated intramembrane proteolysis and the subsequent release of functional polypeptides from their membrane anchors. Functional component of endoplasmic reticulum-associated degradation (ERAD) for misfolded membrane proteins. Required for the degradation process of some specific misfolded endoplasmic reticulum (ER) luminal proteins. Participates in the transfer of misfolded proteins from the ER to the cytosol, where they are destroyed by the proteasome in a ubiquitin-dependent manner. Functions in BIK, MPZ, PKD1, PTCRA, RHO, STEAP3 and TRAC processing. Involved in the regulation of exosomal secretion; inhibits the TSAP6-mediated secretion pathway. Involved in the regulation of apoptosis; modulates BIK-mediated apoptotic activity. Also plays a role in the regulation of spermatogenesis; inhibits apoptotic activity in spermatogonia. The chain is Rhomboid-related protein 4 (Rhbdd1) from Rattus norvegicus (Rat).